The sequence spans 610 residues: UvrABC system protein C (610 aa).

The GIY-YIG domain occupies 12 to 91 (TSPGVYLYKN…IKQKKPRFNI (80 aa)). Residues 202–237 (SDLKQSLTARMNKAAEGMQFELAAKYRDLITTVEDL) form the UVR domain.

Belongs to the UvrC family. In terms of assembly, interacts with UvrB in an incision complex.

It localises to the cytoplasm. Its function is as follows. The UvrABC repair system catalyzes the recognition and processing of DNA lesions. UvrC both incises the 5' and 3' sides of the lesion. The N-terminal half is responsible for the 3' incision and the C-terminal half is responsible for the 5' incision. This is UvrABC system protein C from Koribacter versatilis (strain Ellin345).